Consider the following 559-residue polypeptide: Polypeptide N-acetylgalactosaminyltransferase 1 (559 aa).

Topologically, residues 1–8 (MRKFAYCK) are cytoplasmic. Residues 9 to 28 (VVLATSLIWVLLDMFLLLYF) traverse the membrane as a helical; Signal-anchor for type II membrane protein segment. The Lumenal segment spans residues 29 to 559 (SECNKCDEKK…LRNVTLPEIF (531 aa)). Residues 45–65 (GDVLEPVQKPHEGPGEMGKPV) are disordered. A glycan (N-linked (GlcNAc...) asparagine) is linked at asparagine 95. 5 cysteine pairs are disulfide-bonded: cysteine 106/cysteine 339, cysteine 330/cysteine 408, cysteine 442/cysteine 459, cysteine 482/cysteine 497, and cysteine 523/cysteine 540. A catalytic subdomain A region spans residues 115 to 225 (LPTTSVVIVF…VGWLEPLLAR (111 aa)). Substrate contacts are provided by aspartate 156 and arginine 186. Mn(2+)-binding residues include aspartate 209 and histidine 211. A catalytic subdomain B region spans residues 285-347 (PVRTPTMAGG…TCSHVGHVFR (63 aa)). Tryptophan 316 contacts substrate. Histidine 344 contributes to the Mn(2+) binding site. Substrate contacts are provided by arginine 347 and tyrosine 352. The Ricin B-type lectin domain maps to 429–551 (FSLGEIRNVE…GSRSQQWLLR (123 aa)). The N-linked (GlcNAc...) asparagine glycan is linked to asparagine 552.

Belongs to the glycosyltransferase 2 family. GalNAc-T subfamily. Requires Mn(2+) as cofactor. As to expression, widely expressed. Expressed in all tissues tested.

It is found in the golgi apparatus. The protein localises to the golgi stack membrane. It localises to the secreted. It catalyses the reaction L-seryl-[protein] + UDP-N-acetyl-alpha-D-galactosamine = a 3-O-[N-acetyl-alpha-D-galactosaminyl]-L-seryl-[protein] + UDP + H(+). The enzyme catalyses L-threonyl-[protein] + UDP-N-acetyl-alpha-D-galactosamine = a 3-O-[N-acetyl-alpha-D-galactosaminyl]-L-threonyl-[protein] + UDP + H(+). It participates in protein modification; protein glycosylation. In terms of biological role, catalyzes the initial reaction in O-linked oligosaccharide biosynthesis, the transfer of an N-acetyl-D-galactosamine residue to a serine or threonine residue on the protein receptor. Has a broad spectrum of substrates such as apomucin-, MUC5AC-, MUC1- and MUC2-derived peptides. The protein is Polypeptide N-acetylgalactosaminyltransferase 1 of Homo sapiens (Human).